A 203-amino-acid chain; its full sequence is 2-phospho-L-lactate guanylyltransferase (203 aa).

The protein belongs to the CofC family. In terms of assembly, homodimer.

It catalyses the reaction (2S)-2-phospholactate + GTP + H(+) = (2S)-lactyl-2-diphospho-5'-guanosine + diphosphate. It functions in the pathway cofactor biosynthesis; coenzyme F420 biosynthesis. In terms of biological role, guanylyltransferase that catalyzes the activation of (2S)-2-phospholactate (2-PL) as (2S)-lactyl-2-diphospho-5'-guanosine, via the condensation of 2-PL with GTP. It is involved in the biosynthesis of coenzyme F420, a hydride carrier cofactor. The protein is 2-phospho-L-lactate guanylyltransferase of Halomicrobium mukohataei (strain ATCC 700874 / DSM 12286 / JCM 9738 / NCIMB 13541) (Haloarcula mukohataei).